The following is a 452-amino-acid chain: tRNA modification GTPase MnmE (452 aa).

(6S)-5-formyl-5,6,7,8-tetrahydrofolate contacts are provided by Arg21, Glu78, and Lys118. The TrmE-type G domain maps to Gly214–Gly375. Asn224 contacts K(+). GTP contacts are provided by residues Asn224 to Ser229, Thr243 to Thr249, and Asp268 to Gly271. Ser228 contacts Mg(2+). Residues Thr243, Ile245, and Thr248 each coordinate K(+). Residue Thr249 coordinates Mg(2+). Lys452 lines the (6S)-5-formyl-5,6,7,8-tetrahydrofolate pocket.

Belongs to the TRAFAC class TrmE-Era-EngA-EngB-Septin-like GTPase superfamily. TrmE GTPase family. As to quaternary structure, homodimer. Heterotetramer of two MnmE and two MnmG subunits. K(+) serves as cofactor.

The protein localises to the cytoplasm. In terms of biological role, exhibits a very high intrinsic GTPase hydrolysis rate. Involved in the addition of a carboxymethylaminomethyl (cmnm) group at the wobble position (U34) of certain tRNAs, forming tRNA-cmnm(5)s(2)U34. The sequence is that of tRNA modification GTPase MnmE from Actinobacillus pleuropneumoniae serotype 3 (strain JL03).